We begin with the raw amino-acid sequence, 187 residues long: Adenylate kinase (187 aa).

Residue 10–15 participates in ATP binding; it reads GSGKGT. The interval 30 to 59 is NMP; that stretch reads STGDLLRAEVAAGSPLGLKAKEVMARGDLV. Residues T31, R36, 57-59, 85-88, and Q92 each bind AMP; these read DLV and GYPR. The interval 126–136 is LID; sequence GRAKAEGREDD. R127 is a binding site for ATP. 2 residues coordinate AMP: R133 and R144. ATP is bound at residue G172.

Belongs to the adenylate kinase family. In terms of assembly, monomer.

The protein localises to the cytoplasm. The catalysed reaction is AMP + ATP = 2 ADP. Its pathway is purine metabolism; AMP biosynthesis via salvage pathway; AMP from ADP: step 1/1. Catalyzes the reversible transfer of the terminal phosphate group between ATP and AMP. Plays an important role in cellular energy homeostasis and in adenine nucleotide metabolism. The polypeptide is Adenylate kinase (Xanthomonas oryzae pv. oryzae (strain MAFF 311018)).